The sequence spans 315 residues: Probable cell division protein WhiA (315 aa).

The H-T-H motif DNA-binding region spans 277–311 (SLQELGAMMPSGQISKSGVNHRLRKLNQIAEGYQQ).

Belongs to the WhiA family.

Involved in cell division and chromosome segregation. The polypeptide is Probable cell division protein WhiA (Lacticaseibacillus casei (strain BL23) (Lactobacillus casei)).